A 296-amino-acid chain; its full sequence is Nucleotide-binding protein str0831 (296 aa).

Residue 13 to 20 participates in ATP binding; it reads GMSGAGKT. 63-66 contacts GTP; it reads DMRS.

It belongs to the RapZ-like family.

Its function is as follows. Displays ATPase and GTPase activities. The chain is Nucleotide-binding protein str0831 from Streptococcus thermophilus (strain CNRZ 1066).